The following is a 276-amino-acid chain: UPF0328 protein ECU01_0090/ECU01_1520/ECU02_1550/ECU08_0020 (276 aa).

The segment at 1–24 (MGIIDVQRSHLTATPSKERDAPAH) is disordered.

It belongs to the UPF0328 family.

The sequence is that of UPF0328 protein ECU01_0090/ECU01_1520/ECU02_1550/ECU08_0020 from Encephalitozoon cuniculi (strain GB-M1) (Microsporidian parasite).